Here is a 369-residue protein sequence, read N- to C-terminus: N-succinylamino acid racemase (369 aa).

Catalysis depends on K163, which acts as the Proton donor. The Mg(2+) site is built by D188, E213, and D238. Catalysis depends on K262, which acts as the Proton acceptor.

The protein belongs to the mandelate racemase/muconate lactonizing enzyme family. MenC type 2 subfamily. In terms of assembly, homooctamer. Tetramer of dimers. A divalent metal cation is required as a cofactor.

It catalyses the reaction (1R,6R)-6-hydroxy-2-succinyl-cyclohexa-2,4-diene-1-carboxylate = 2-succinylbenzoate + H2O. Acts as a N-succinylamino acid racemase (NSAR) that catalyzes the racemization of N-succinyl-L-phenylglycine. Also converts 2-succinyl-6-hydroxy-2,4-cyclohexadiene-1-carboxylate (SHCHC) to 2-succinylbenzoate (OSB). Catalyzes both N-succinylamino acid racemization and OSB synthesis at equivalent rates. However, NSAR activity is probably the protein's biological function, because menaquinone biosynthesis genes are missing in this species. The sequence is that of N-succinylamino acid racemase from Thermus thermophilus (strain ATCC 27634 / DSM 579 / HB8).